Here is a 648-residue protein sequence, read N- to C-terminus: Transmembrane 9 superfamily member 8 (648 aa).

Positions 1-33 are cleaved as a signal peptide; it reads MAMEFLRSSRRILESSGCAIALIFLLFIHGAHS. Over 34 to 285 the chain is Lumenal; sequence FYLPGVAPQD…YLLMSDNQIH (252 aa). The chain crosses the membrane as a helical span at residues 286–306; that stretch reads WFSIVNSLMIVLFLSGMVAMI. Over 307-355 the chain is Cytoplasmic; it reads MLRTLYRDISRYNELETQEEAQEETGWKLVHGDVFRLPTNSDLLCVYVG. A helical transmembrane segment spans residues 356–376; the sequence is TGVQCLGMVFVTMIFAMLGFL. Over 377-381 the chain is Lumenal; that stretch reads SPSNR. The helical transmembrane segment at 382-402 threads the bilayer; sequence GGLMTAMLLLWVFMGLFAGYA. Over 403–422 the chain is Cytoplasmic; it reads SSRLYKMFKGTEWKRIAFRT. The chain crosses the membrane as a helical span at residues 423–443; that stretch reads AFLFPAVVSAIFFVLNALIWG. Topologically, residues 444-455 are lumenal; that stretch reads QKSSGAVPFGTM. Residues 456 to 476 traverse the membrane as a helical segment; the sequence is FALIFLWFGISVPLVFVGGYI. The Cytoplasmic portion of the chain corresponds to 477–506; sequence GFKKPAADDPVKTNKIPRQIPEQAWYMNPV. A helical membrane pass occupies residues 507–527; sequence FSILIGGILPFGAVFIELFFI. The Lumenal portion of the chain corresponds to 528 to 538; sequence LTSIWLNQFYY. Residues 539–559 form a helical membrane-spanning segment; sequence IFGFLFLVFVILIVTCAEITV. At 560-577 the chain is on the cytoplasmic side; that stretch reads VLCYFQLCSEDYLWWWRS. A helical membrane pass occupies residues 578 to 598; the sequence is YLTSGSSALYLFLYATFYFFT. Residues 599–604 are Lumenal-facing; that stretch reads KLQITK. The chain crosses the membrane as a helical span at residues 605–625; sequence LVSAMLYFGYMLIASYAFFVL. Topologically, residues 626 to 648 are cytoplasmic; that stretch reads TGTIGFYACLWFTRLIYSSVKID. Positions 637–642 match the Endoplasmic reticulum export signal motif; it reads FTRLIY. The Golgi retention signal motif lies at 646 to 648; that stretch reads KID.

Belongs to the nonaspanin (TM9SF) (TC 9.A.2) family.

The protein localises to the endosome membrane. Its subcellular location is the golgi apparatus membrane. The chain is Transmembrane 9 superfamily member 8 from Arabidopsis thaliana (Mouse-ear cress).